A 296-amino-acid polypeptide reads, in one-letter code: Small ribosomal subunit protein uS2 (296 aa).

A compositionally biased stretch (low complexity) spans 274 to 284 (ASSAAPADTWA). A disordered region spans residues 274–296 (ASSAAPADTWAGESGNPDAGVKW).

This sequence belongs to the universal ribosomal protein uS2 family. Component of the small ribosomal subunit. Mature ribosomes consist of a small (40S) and a large (60S) subunit. The 40S subunit contains about 33 different proteins and 1 molecule of RNA (18S). The 60S subunit contains about 49 different proteins and 3 molecules of RNA (25S, 5.8S and 5S). Interacts with RPS21.

It localises to the cytoplasm. Required for the assembly and/or stability of the 40S ribosomal subunit. Required for the processing of the 20S rRNA-precursor to mature 18S rRNA in a late step of the maturation of 40S ribosomal subunits. The chain is Small ribosomal subunit protein uS2 from Ajellomyces capsulatus (strain G186AR / H82 / ATCC MYA-2454 / RMSCC 2432) (Darling's disease fungus).